A 195-amino-acid polypeptide reads, in one-letter code: Probable GTP-binding protein EngB (195 aa).

Positions leucine 22–glutamate 194 constitute an EngB-type G domain. GTP is bound by residues glycine 30 to serine 37, glycine 56 to serine 60, aspartate 74 to glycine 77, threonine 141 to aspartate 144, and threonine 173 to serine 175. Residues serine 37 and threonine 58 each coordinate Mg(2+).

This sequence belongs to the TRAFAC class TrmE-Era-EngA-EngB-Septin-like GTPase superfamily. EngB GTPase family. Requires Mg(2+) as cofactor.

Functionally, necessary for normal cell division and for the maintenance of normal septation. In Thermotoga maritima (strain ATCC 43589 / DSM 3109 / JCM 10099 / NBRC 100826 / MSB8), this protein is Probable GTP-binding protein EngB.